Consider the following 314-residue polypeptide: Inositol oxygenase 5 (314 aa).

Substrate-binding positions include R54 and 112 to 114; that span reads DES. Positions 125, 150, and 151 each coordinate Fe cation. Substrate is bound by residues K154 and 171-172; that span reads GD. Fe cation-binding residues include H223, H249, and D282. Residue 249 to 250 coordinates substrate; the sequence is HS.

Belongs to the myo-inositol oxygenase family. Requires Fe cation as cofactor. As to expression, expressed in flowers and siliques.

It is found in the cytoplasm. The catalysed reaction is myo-inositol + O2 = D-glucuronate + H2O + H(+). It participates in polyol metabolism; myo-inositol degradation into D-glucuronate; D-glucuronate from myo-inositol: step 1/1. Involved in the biosynthesis of UDP-glucuronic acid (UDP-GlcA), providing nucleotide sugars for cell-wall polymers. May be also involved in plant ascorbate biosynthesis. The sequence is that of Inositol oxygenase 5 (MIOX5) from Arabidopsis thaliana (Mouse-ear cress).